Reading from the N-terminus, the 729-residue chain is Probable cyclic di-GMP phosphodiesterase PdeA (729 aa).

8 consecutive transmembrane segments (helical) span residues Ala-17 to Ile-37, Tyr-41 to Trp-61, Phe-83 to Ile-103, Phe-126 to Phe-146, Ile-163 to Phe-183, Ala-214 to Tyr-234, Phe-238 to Leu-258, and Tyr-289 to Val-309. The 129-residue stretch at Ala-348–Ser-476 folds into the GGDEF domain. The EAL domain occupies Gln-488–Asp-729.

The protein resides in the cell membrane. It catalyses the reaction 3',3'-c-di-GMP + H2O = 5'-phosphoguanylyl(3'-&gt;5')guanosine + H(+). Its function is as follows. Phosphodiesterase (PDE) that catalyzes the hydrolysis of cyclic-di-GMP (c-di-GMP) to 5'-pGpG. The chain is Probable cyclic di-GMP phosphodiesterase PdeA from Escherichia coli (strain K12).